A 160-amino-acid polypeptide reads, in one-letter code: Transcriptional regulator MraZ (160 aa).

SpoVT-AbrB domains are found at residues 5 to 50 and 93 to 136; these read NFET…DGGY and AVEC…SQAE.

Belongs to the MraZ family. Forms oligomers.

The protein localises to the cytoplasm. It is found in the nucleoid. The protein is Transcriptional regulator MraZ of Geotalea daltonii (strain DSM 22248 / JCM 15807 / FRC-32) (Geobacter daltonii).